We begin with the raw amino-acid sequence, 940 residues long: Isoleucine--tRNA ligase (940 aa).

The 'HIGH' region signature appears at 58 to 68 (PYANGSIHIGH). L-isoleucyl-5'-AMP is bound at residue glutamate 564. The 'KMSKS' region motif lies at 605–609 (KMSKS). Residue lysine 608 coordinates ATP. 4 residues coordinate Zn(2+): cysteine 903, cysteine 906, cysteine 923, and cysteine 926.

This sequence belongs to the class-I aminoacyl-tRNA synthetase family. IleS type 1 subfamily. In terms of assembly, monomer. Zn(2+) is required as a cofactor.

It is found in the cytoplasm. It carries out the reaction tRNA(Ile) + L-isoleucine + ATP = L-isoleucyl-tRNA(Ile) + AMP + diphosphate. Functionally, catalyzes the attachment of isoleucine to tRNA(Ile). As IleRS can inadvertently accommodate and process structurally similar amino acids such as valine, to avoid such errors it has two additional distinct tRNA(Ile)-dependent editing activities. One activity is designated as 'pretransfer' editing and involves the hydrolysis of activated Val-AMP. The other activity is designated 'posttransfer' editing and involves deacylation of mischarged Val-tRNA(Ile). This is Isoleucine--tRNA ligase from Shewanella sp. (strain MR-4).